We begin with the raw amino-acid sequence, 144 residues long: Large ribosomal subunit protein uL11 (144 aa).

Belongs to the universal ribosomal protein uL11 family. In terms of assembly, part of the ribosomal stalk of the 50S ribosomal subunit. Interacts with L10 and the large rRNA to form the base of the stalk. L10 forms an elongated spine to which L12 dimers bind in a sequential fashion forming a multimeric L10(L12)X complex. Post-translationally, one or more lysine residues are methylated.

Its function is as follows. Forms part of the ribosomal stalk which helps the ribosome interact with GTP-bound translation factors. This is Large ribosomal subunit protein uL11 from Francisella tularensis subsp. holarctica (strain OSU18).